The following is a 251-amino-acid chain: Triosephosphate isomerase (251 aa).

Residue 12-14 (NWK) participates in substrate binding. His-98 serves as the catalytic Electrophile. Residue Glu-168 is the Proton acceptor of the active site. Substrate is bound by residues Gly-174, Ser-213, and 234-235 (GG).

The protein belongs to the triosephosphate isomerase family. As to quaternary structure, homodimer.

The protein resides in the cytoplasm. It catalyses the reaction D-glyceraldehyde 3-phosphate = dihydroxyacetone phosphate. The protein operates within carbohydrate biosynthesis; gluconeogenesis. It participates in carbohydrate degradation; glycolysis; D-glyceraldehyde 3-phosphate from glycerone phosphate: step 1/1. In terms of biological role, involved in the gluconeogenesis. Catalyzes stereospecifically the conversion of dihydroxyacetone phosphate (DHAP) to D-glyceraldehyde-3-phosphate (G3P). This Afipia carboxidovorans (strain ATCC 49405 / DSM 1227 / KCTC 32145 / OM5) (Oligotropha carboxidovorans) protein is Triosephosphate isomerase.